A 45-amino-acid polypeptide reads, in one-letter code: Enterotoxin (45 aa).

One of 3 components (of 35, 45 and 105 kDa) of the enterotoxin.

Functionally, one of 3 components required for cytotoxicity (tested in African green monkey Vero cells); the complex is not hemolytic. This Bacillus cereus protein is Enterotoxin.